A 463-amino-acid chain; its full sequence is T-box transcription factor TBX1-B (463 aa).

Disordered stretches follow at residues 39-58 (SPSP…PCSA) and 75-102 (GASS…APVK). Residues 75–96 (GASSSSCASSTPGSGSTGSSSG) show a composition bias toward low complexity. Positions 119–297 (LWDEFNQLGT…SNPFAKGFRD (179 aa)) form a DNA-binding region, T-box. 2 disordered regions span residues 320–343 (RSRN…RREY) and 367–406 (SPSL…HHHP). Residues 323–332 (NPVSSPPQNG) are compositionally biased toward polar residues. Residues 333 to 343 (SDKDGDGRREY) show a composition bias toward basic and acidic residues. Residues 367-380 (SPSLPVPGGLVPLS) show a composition bias toward low complexity. Positions 420–431 (KTRPAPYPLPSI) match the Nuclear localization signal motif.

In terms of assembly, binds DNA as a dimer. Interacts with dscr6/ripply3.

It is found in the nucleus. Functionally, probable transcriptional regulator involved in developmental processes. Binds to the palindromic T site 5'-TTCACACCTAGGTGTGAA-3' DNA sequence. Induces pre-placodal ectoderm (PPE) gene expression in regions where RIPPLY3 is absent. Plays a role in the formation of the anteroposterior (AP) axis during embryonic development; required to establish the posterolateral border of the pre-placodal ectoderm (PPE) acting downstream of the retinoic acid receptor (RAR) signaling. Probable transcriptional regulator involved in developmental processes. Binds to the palindromic T site 5'-TTCACACCTAGGTGTGAA-3' DNA sequence. Is required for normal development of the pharyngeal arch arteries. The protein is T-box transcription factor TBX1-B (tbx1-b) of Xenopus laevis (African clawed frog).